A 260-amino-acid chain; its full sequence is Kallikrein-8 (260 aa).

A signal peptide spans 1–28 (MGRPPPCAIQPWILLLLFMGAWAGLTRA). Residues 29–32 (QGSK) constitute a propeptide that is removed on maturation. A Peptidase S1 domain is found at 33–257 (ILEGRECIPH…YTTWIKKTMD (225 aa)). Disulfide bonds link C39–C173, C58–C74, C145–C246, C152–C218, C184–C198, and C208–C233. Catalysis depends on H73, which acts as the Charge relay system. N110 carries an N-linked (GlcNAc...) asparagine glycan. The active-site Charge relay system is D120. Catalysis depends on S212, which acts as the Charge relay system.

The protein belongs to the peptidase S1 family. Kallikrein subfamily. As to quaternary structure, interacts with SPINK9. As to expression, expressed in the limbic system of mouse brain and is localized at highest concentration in pyramidal neurons of the hippocampal CA1-3 subfields. Also detected in spinal cord gray matter and in keratinized stratified epithelia of epidermis, hair, tongue, palate, nasal cavity, pharynges, esophagus and forestomach. In skin and mucus membranes, expressed in stratum spinosum and stratum granulosum. Expressed during estrus in vaginal epithelial cells but not stromal cells. Within the vaginal epithelium, expressed in prickle cells, granular cells and parakeratotic cells but not in basal cells. Not expressed in uterus. Expressed in the keratinocytes.

Its subcellular location is the secreted. The protein resides in the cytoplasm. The enzyme catalyses Cleavage of amide substrates following the basic amino acids Arg or Lys at the P1 position, with a preference for Arg over Lys.. Strongly inhibited by diisopropyl fluorophosphate, leupeptin and (4-amidinophenyl)methanesulfonyl 1-fluoride. Its function is as follows. Serine protease which is capable of degrading a number of proteins such as casein, fibrinogen, kininogen, fibronectin and collagen type IV. Also cleaves L1CAM in response to increased neural activity. Induces neurite outgrowth and fasciculation of cultured hippocampal neurons. Plays a role in the formation and maturation of orphan and small synaptic boutons in the Schaffer-collateral pathway, regulates Schaffer-collateral long-term potentiation in the hippocampus and is required for memory acquisition and synaptic plasticity. Involved in skin desquamation and keratinocyte proliferation. Plays a role in the secondary phase of pathogenesis following spinal cord injury. This Mus musculus (Mouse) protein is Kallikrein-8 (Klk8).